The primary structure comprises 941 residues: 26S proteasome regulatory subunit RPN2 (941 aa).

10 PC repeats span residues 363–396 (SATA…SSRF), 400–437 (GSLY…EDVD), 442–476 (GASL…TSGE), 477–511 (AAAF…GNIT), 513–546 (GLSM…LIRY), 547–582 (GGAF…DVRR), 583–615 (AAVT…AHDR), 617–651 (GAAF…FVRQ), 652–689 (AAMI…KHQE), and 695–731 (GACV…VGLA). Residues 808–854 (KARAKKTKKEKDTNEDDKKKKEKDLKKEETKKDDAKKESEAEEDFNK) form a disordered region. A compositionally biased stretch (basic and acidic residues) spans 816–854 (KEKDTNEDDKKKKEKDLKKEETKKDDAKKESEAEEDFNK).

The protein belongs to the proteasome subunit S1 family.

Functionally, acts as a regulatory subunit of the 26S proteasome which is involved in the ATP-dependent degradation of ubiquitinated proteins. The chain is 26S proteasome regulatory subunit RPN2 (RPN2) from Candida glabrata (strain ATCC 2001 / BCRC 20586 / JCM 3761 / NBRC 0622 / NRRL Y-65 / CBS 138) (Yeast).